We begin with the raw amino-acid sequence, 159 residues long: Putative transmembrane protein ORF159 (159 aa).

Transmembrane regions (helical) follow at residues 20 to 40 (LLLSLLLLLSTICGVLPLSLF) and 59 to 79 (IIAVDIASAICFIIFCNGFCC). The Cell attachment site signature appears at 106–108 (RGD).

The protein localises to the host membrane. The polypeptide is Putative transmembrane protein ORF159 (Acidianus sp. F28 (AFV-2)).